A 230-amino-acid polypeptide reads, in one-letter code: Orotidine 5'-phosphate decarboxylase (230 aa).

Residues Asp10, Lys31, 58 to 67 (DLKLHDIPNT), Thr117, Arg179, Gln188, Gly208, and Arg209 contribute to the substrate site. The Proton donor role is filled by Lys60.

The protein belongs to the OMP decarboxylase family. Type 1 subfamily. Homodimer.

The enzyme catalyses orotidine 5'-phosphate + H(+) = UMP + CO2. Its pathway is pyrimidine metabolism; UMP biosynthesis via de novo pathway; UMP from orotate: step 2/2. Its function is as follows. Catalyzes the decarboxylation of orotidine 5'-monophosphate (OMP) to uridine 5'-monophosphate (UMP). The chain is Orotidine 5'-phosphate decarboxylase from Staphylococcus aureus (strain Mu3 / ATCC 700698).